Consider the following 363-residue polypeptide: Phosphoserine aminotransferase (363 aa).

The L-glutamate site is built by serine 9 and arginine 42. Pyridoxal 5'-phosphate contacts are provided by residues 76–77 (AR), tryptophan 102, threonine 154, aspartate 174, and glutamine 197. Lysine 198 is subject to N6-(pyridoxal phosphate)lysine. Position 240-241 (240-241 (NT)) interacts with pyridoxal 5'-phosphate.

It belongs to the class-V pyridoxal-phosphate-dependent aminotransferase family. SerC subfamily. Homodimer. Pyridoxal 5'-phosphate serves as cofactor.

It is found in the cytoplasm. It carries out the reaction O-phospho-L-serine + 2-oxoglutarate = 3-phosphooxypyruvate + L-glutamate. It catalyses the reaction 4-(phosphooxy)-L-threonine + 2-oxoglutarate = (R)-3-hydroxy-2-oxo-4-phosphooxybutanoate + L-glutamate. The protein operates within amino-acid biosynthesis; L-serine biosynthesis; L-serine from 3-phospho-D-glycerate: step 2/3. It functions in the pathway cofactor biosynthesis; pyridoxine 5'-phosphate biosynthesis; pyridoxine 5'-phosphate from D-erythrose 4-phosphate: step 3/5. Its function is as follows. Catalyzes the reversible conversion of 3-phosphohydroxypyruvate to phosphoserine and of 3-hydroxy-2-oxo-4-phosphonooxybutanoate to phosphohydroxythreonine. The chain is Phosphoserine aminotransferase from Baumannia cicadellinicola subsp. Homalodisca coagulata.